The sequence spans 461 residues: Chromosomal replication initiator protein DnaA (461 aa).

Residues 1-68 (MINAWAQIEH…EKAAASVLGS (68 aa)) form a domain I, interacts with DnaA modulators region. A domain II region spans residues 68 to 118 (SVPTITVVSGEEPAAAPRPVQVPAQKRPAAARTSGAEQMGLPLHYASRSAD). The tract at residues 119–336 (SIKWMHSFDE…SCLRNLLLKA (218 aa)) is domain III, AAA+ region. ATP-binding residues include glycine 162, glycine 164, lysine 165, and threonine 166. The interval 337–461 (RLLNQQITMD…VERNGRIIHP (125 aa)) is domain IV, binds dsDNA.

Belongs to the DnaA family. As to quaternary structure, oligomerizes as a right-handed, spiral filament on DNA at oriC.

Its subcellular location is the cytoplasm. Its function is as follows. Plays an essential role in the initiation and regulation of chromosomal replication. ATP-DnaA binds to the origin of replication (oriC) to initiate formation of the DNA replication initiation complex once per cell cycle. Binds the DnaA box (a 9 base pair repeat at the origin) and separates the double-stranded (ds)DNA. Forms a right-handed helical filament on oriC DNA; dsDNA binds to the exterior of the filament while single-stranded (ss)DNA is stabiized in the filament's interior. The ATP-DnaA-oriC complex binds and stabilizes one strand of the AT-rich DNA unwinding element (DUE), permitting loading of DNA polymerase. After initiation quickly degrades to an ADP-DnaA complex that is not apt for DNA replication. Binds acidic phospholipids. This Oleidesulfovibrio alaskensis (strain ATCC BAA-1058 / DSM 17464 / G20) (Desulfovibrio alaskensis) protein is Chromosomal replication initiator protein DnaA.